An 811-amino-acid chain; its full sequence is Ribosome biogenesis protein ERB1 (811 aa).

Positions Met1–Pro11 are enriched in polar residues. The tract at residues Met1–Pro138 is disordered. The span at Glu27–Ser96 shows a compositional bias: acidic residues. Over residues Ala104–Ala121 the composition is skewed to polar residues. The segment covering Glu128–Pro138 has biased composition (basic and acidic residues). A required for interaction with NOP7 region spans residues Arg270 to Gly386. The tract at residues Gly386–Pro422 is required for interaction with YTM1. 2 WD repeats span residues Gly438–Lys477 and Asn485–Glu525. A disordered region spans residues Thr547–Ala566. 5 WD repeats span residues Gln595 to Pro637, Lys640 to Lys678, Pro681 to Lys720, Tyr724 to Thr764, and Ile780 to Thr811.

The protein belongs to the WD repeat BOP1/ERB1 family. Component of the NOP7 complex, composed of ERB1, NOP7 and YTM1. The complex is held together by ERB1, which interacts with NOP7 via its N-terminal domain and with YTM1 via a high-affinity interaction between the seven-bladed beta-propeller domains of the 2 proteins. The NOP7 complex associates with the 66S pre-ribosome.

It localises to the nucleus. The protein localises to the nucleolus. It is found in the nucleoplasm. In terms of biological role, component of the NOP7 complex, which is required for maturation of the 25S and 5.8S ribosomal RNAs and formation of the 60S ribosome. This is Ribosome biogenesis protein ERB1 from Debaryomyces hansenii (strain ATCC 36239 / CBS 767 / BCRC 21394 / JCM 1990 / NBRC 0083 / IGC 2968) (Yeast).